The sequence spans 272 residues: Carbonic anhydrase (272 aa).

Zn(2+) is bound by residues Cys39, His98, and Cys101.

Belongs to the beta-class carbonic anhydrase family. In terms of assembly, a hexamer formed by a trimer of dimers. Purified from carboxysomes with the both RuBisCO subunits and the full-length form of CcmM, probably interacts with the N-terminus of CcmM. Requires Zn(2+) as cofactor.

The protein resides in the carboxysome. It carries out the reaction hydrogencarbonate + H(+) = CO2 + H2O. Reversible hydration of carbon dioxide. Essential to photosynthetic carbon dioxide fixation, supplies CO(2) to RuBisCO (ribulose bisphosphate carboxylase, rbcL-rbcS) in the carboxysome. Loss of activity results in limitation of CO(2) availability to RuBisCO located in the cytoplasm. The chain is Carbonic anhydrase from Synechococcus elongatus (strain ATCC 33912 / PCC 7942 / FACHB-805) (Anacystis nidulans R2).